The chain runs to 104 residues: Precursor of CEP11 (104 aa).

Residues 1-27 (MAKTRRVIYLFLTIVLLFCELIDEAQG) form the signal peptide. A propeptide spanning residues 28–85 (SRFRCHHSEDYSCKKRSSHHHHHHHHHQQQQHHHKDTPPEELQGSIKTRRSKDIYGLN) is cleaved from the precursor. Positions 37–104 (DYSCKKRSSH…SPGVGHLIKT (68 aa)) are disordered. Over residues 41–62 (KKRSSHHHHHHHHHQQQQHHHK) the composition is skewed to basic residues. Hydroxyproline occurs at positions 92 and 96. A propeptide spanning residues 101–104 (LIKT) is cleaved from the precursor.

Belongs to the C-terminally encoded plant signaling peptide (CEP) family. As to quaternary structure, interacts with CEP receptors (e.g. CEPR1 and CEPR2). In terms of processing, the mature small signaling peptide is generated by proteolytic processing of the longer precursor. In terms of tissue distribution, expressed in lateral root primordia and in lateral roots excluding the meristem region.

It localises to the secreted. Its subcellular location is the extracellular space. The protein localises to the apoplast. Functionally, extracellular signaling peptide that may regulate primary root growth rate and systemic nitrogen (N)-demand signaling. Mediates up-regulation of genes involved in N uptake and assimilation pathways. This chain is Precursor of CEP11, found in Arabidopsis thaliana (Mouse-ear cress).